The following is a 1229-amino-acid chain: DNA-directed RNA polymerase subunit beta (1229 aa).

This sequence belongs to the RNA polymerase beta chain family. As to quaternary structure, the RNAP catalytic core consists of 2 alpha, 1 beta, 1 beta' and 1 omega subunit. When a sigma factor is associated with the core the holoenzyme is formed, which can initiate transcription.

It carries out the reaction RNA(n) + a ribonucleoside 5'-triphosphate = RNA(n+1) + diphosphate. DNA-dependent RNA polymerase catalyzes the transcription of DNA into RNA using the four ribonucleoside triphosphates as substrates. This Roseiflexus sp. (strain RS-1) protein is DNA-directed RNA polymerase subunit beta.